We begin with the raw amino-acid sequence, 362 residues long: Putative HLA class I histocompatibility antigen, alpha chain H (362 aa).

A signal peptide spans 1-24 (MVLMAPRTLLLLLSGALALTQTWA). The tract at residues 25–114 (RSHSMRYFYT…ALRYYNQSEG (90 aa)) is alpha-1. Residues 25–308 (RSHSMRYFYT…EPSSQPTVPI (284 aa)) are Extracellular-facing. Asparagine 110 carries an N-linked (GlcNAc...) asparagine glycan. Residues 115-206 (GSHTMQVMYG…ENGKETLQRA (92 aa)) form an alpha-2 region. The alpha-3 stretch occupies residues 207 to 298 (DPPKTHMTHH…GLPEPLTLRW (92 aa)). An Ig-like C1-type domain is found at 209 to 297 (PKTHMTHHPI…EGLPEPLTLR (89 aa)). Cysteine 227 and cysteine 283 form a disulfide bridge. The connecting peptide stretch occupies residues 299-308 (EPSSQPTVPI). The chain crosses the membrane as a helical span at residues 309–332 (VGIVAGLVLLVAVVTGAVVAAVMW). The Cytoplasmic portion of the chain corresponds to 333 to 362 (RKKSSDRKGGSYSQAASSNSAQGSDVSLTA). Residues 337-362 (SDRKGGSYSQAASSNSAQGSDVSLTA) are disordered. The segment covering 342-356 (GSYSQAASSNSAQGS) has biased composition (low complexity).

The protein belongs to the MHC class I family. Heterodimer of an alpha chain and a beta chain (beta-2-microglobulin).

The protein resides in the cell membrane. Functionally, involved in the presentation of foreign antigens to the immune system. In Homo sapiens (Human), this protein is Putative HLA class I histocompatibility antigen, alpha chain H (HLA-H).